The sequence spans 38 residues: Plastocyanin (38 aa).

The region spanning 1 to 38 (AQTVEVKMGADGGLLVFEPAKAGPHNVVFDEDNIPPGV) is the Plastocyanin-like domain. His25 contributes to the Cu cation binding site.

It belongs to the plastocyanin family. The cofactor is Cu(2+).

The protein localises to the plastid. It localises to the chloroplast thylakoid membrane. Functionally, participates in electron transfer between P700 and the cytochrome b6-f complex in photosystem I. The chain is Plastocyanin (PETE) from Thalassiosira oceanica (Marine diatom).